The following is a 164-amino-acid chain: Respiratory growth induced protein 2 (164 aa).

It belongs to the RGI1 family.

It localises to the cytoplasm. Its function is as follows. Involved in the control of energetic metabolism and significantly contribute to cell fitness, especially under respiratory growth conditions. The sequence is that of Respiratory growth induced protein 2 (RGI2) from Saccharomyces cerevisiae (strain RM11-1a) (Baker's yeast).